The sequence spans 574 residues: Serine hydroxymethyltransferase (574 aa).

180-182 contacts (6S)-5,6,7,8-tetrahydrofolate; the sequence is GHL. Lys-288 carries the N6-(pyridoxal phosphate)lysine modification. Glu-306 contacts (6S)-5,6,7,8-tetrahydrofolate.

It belongs to the SHMT family. Homodimer. Requires pyridoxal 5'-phosphate as cofactor.

It is found in the cytoplasm. It catalyses the reaction (6R)-5,10-methylene-5,6,7,8-tetrahydrofolate + glycine + H2O = (6S)-5,6,7,8-tetrahydrofolate + L-serine. It functions in the pathway one-carbon metabolism; tetrahydrofolate interconversion. The protein operates within amino-acid biosynthesis; glycine biosynthesis; glycine from L-serine: step 1/1. Its function is as follows. Catalyzes the reversible interconversion of serine and glycine with tetrahydrofolate (THF) serving as the one-carbon carrier. This reaction serves as the major source of one-carbon groups required for the biosynthesis of purines, thymidylate, methionine, and other important biomolecules. Also exhibits THF-independent aldolase activity toward beta-hydroxyamino acids, producing glycine and aldehydes, via a retro-aldol mechanism. This is Serine hydroxymethyltransferase from Treponema pallidum (strain Nichols).